The primary structure comprises 211 residues: Cytochrome c biogenesis ATP-binding export protein CcmA 2 (211 aa).

In terms of domain architecture, ABC transporter spans 6-208 (LEARELGVRR…GAVLDLATDA (203 aa)). 38–45 (GPNGAGKT) contacts ATP.

This sequence belongs to the ABC transporter superfamily. CcmA exporter (TC 3.A.1.107) family. In terms of assembly, the complex is composed of two ATP-binding proteins (CcmA) and two transmembrane proteins (CcmB).

Its subcellular location is the cell inner membrane. The enzyme catalyses heme b(in) + ATP + H2O = heme b(out) + ADP + phosphate + H(+). Its function is as follows. Part of the ABC transporter complex CcmAB involved in the biogenesis of c-type cytochromes; once thought to export heme, this seems not to be the case, but its exact role is uncertain. Responsible for energy coupling to the transport system. The sequence is that of Cytochrome c biogenesis ATP-binding export protein CcmA 2 from Cupriavidus metallidurans (strain ATCC 43123 / DSM 2839 / NBRC 102507 / CH34) (Ralstonia metallidurans).